The primary structure comprises 143 residues: Trypsin inhibitor CMc (143 aa).

Residues 1 to 24 (MASCSQHLLSAVAIFSVLAGVATA) form the signal peptide.

Belongs to the protease inhibitor I6 (cereal trypsin/alpha-amylase inhibitor) family. As to expression, endosperm.

The protein resides in the secreted. In terms of biological role, trypsin inhibitor. No alpha-amylase inhibition detected. This Hordeum vulgare (Barley) protein is Trypsin inhibitor CMc (ITR2).